A 136-amino-acid polypeptide reads, in one-letter code: uncharacterized protein (136 aa).

This is an uncharacterized protein from Bacillus subtilis (strain 168).